The chain runs to 459 residues: MAKTKPPVNKNEIYTLTFEDLTHEGNGVAKIEGYPLFVPEVLPDEQAKVKVVKVNKNFGFGKLLELTKTSSHRVEPTCHVHCGGCQLQHMSYDLQLQMKQGQVHNVMKKVAHLDQVPVHPILGMEEPSHYRNKVQIPVGEKNGEVIVGFYQKRSHRILQNQDTCHIQDEAINEVLPFTRQLMNKYGIQAYDEKSHRGQLRHIMVRVGHYTKDIMIVFVTKTSKFPEKDRIIKELTEQFPQVKSIVQNVNDQRTNVVLGKKTKVLWGENYIYDKIGDLTFAISPKSFFQVNPVQTKVLYDKALEYANIDKDDVVIDAYCGIGSISLFLAQKAKKVYGIEVVPEAIEDAKMNAEINGMNNVEFSVGQAEKVMPKWKEQGLDPDVIVVDPPRKGCDVDFLEAMIAMKPKRIVYVSCNPSTLARDLRILEDGGFETKQVQPVDMFPSTNHVECVAELTLKLSN.

In terms of domain architecture, TRAM spans 7 to 65 (PVNKNEIYTLTFEDLTHEGNGVAKIEGYPLFVPEVLPDEQAKVKVVKVNKNFGFGKLLE). 4 residues coordinate [4Fe-4S] cluster: cysteine 78, cysteine 82, cysteine 85, and cysteine 164. Glutamine 288, tyrosine 317, glutamate 338, and aspartate 386 together coordinate S-adenosyl-L-methionine. Cysteine 413 acts as the Nucleophile in catalysis.

It belongs to the class I-like SAM-binding methyltransferase superfamily. RNA M5U methyltransferase family.

This is an uncharacterized protein from Oceanobacillus iheyensis (strain DSM 14371 / CIP 107618 / JCM 11309 / KCTC 3954 / HTE831).